We begin with the raw amino-acid sequence, 378 residues long: Cobalt-precorrin-5B C(1)-methyltransferase (378 aa).

Belongs to the CbiD family.

The enzyme catalyses Co-precorrin-5B + S-adenosyl-L-methionine = Co-precorrin-6A + S-adenosyl-L-homocysteine. The protein operates within cofactor biosynthesis; adenosylcobalamin biosynthesis; cob(II)yrinate a,c-diamide from sirohydrochlorin (anaerobic route): step 6/10. In terms of biological role, catalyzes the methylation of C-1 in cobalt-precorrin-5B to form cobalt-precorrin-6A. This chain is Cobalt-precorrin-5B C(1)-methyltransferase, found in Synechocystis sp. (strain ATCC 27184 / PCC 6803 / Kazusa).